A 229-amino-acid chain; its full sequence is Lipoprotein-releasing system ATP-binding protein LolD 1 (229 aa).

One can recognise an ABC transporter domain in the interval 2–229; it reads LVVSELSKSY…VRRGRFGITA (228 aa). 38-45 provides a ligand contact to ATP; the sequence is GPSGSGKT.

The protein belongs to the ABC transporter superfamily. Lipoprotein translocase (TC 3.A.1.125) family. In terms of assembly, the complex is composed of two ATP-binding proteins (LolD) and two transmembrane proteins (LolC and LolE).

It is found in the cell inner membrane. Part of the ABC transporter complex LolCDE involved in the translocation of mature outer membrane-directed lipoproteins, from the inner membrane to the periplasmic chaperone, LolA. Responsible for the formation of the LolA-lipoprotein complex in an ATP-dependent manner. This is Lipoprotein-releasing system ATP-binding protein LolD 1 from Rhodopirellula baltica (strain DSM 10527 / NCIMB 13988 / SH1).